The following is a 293-amino-acid chain: MHFQDIISSLNSFWSKQGCLLLQPYDTEKGAGTMSPHTFLRAIGPEPWAVAYPEPCRRPTDGRYGDNPNRAQHYFQYQVLIKPSFDGIQETYLSSLEIIGIDPKDHDIRFVEDNWESPTLGAWGVGWEVWLDGMEVTQFTYFQQCGGLDCKPVSIEITYGLERLAMYLQNVDCIWDLSWNQTYKYGDIWLDLEKSNCKYNFEFSNPKRLKELFEIYEGEASDLVLNKLPGPALDFVLKCSHTFNLLEARGVISVTERTSTIGRIRNLARKVAELWLEERQALGFPLLEGDAKE.

Belongs to the class-II aminoacyl-tRNA synthetase family. In terms of assembly, tetramer of two alpha and two beta subunits.

Its subcellular location is the cytoplasm. The enzyme catalyses tRNA(Gly) + glycine + ATP = glycyl-tRNA(Gly) + AMP + diphosphate. The polypeptide is Glycine--tRNA ligase alpha subunit (Prochlorococcus marinus (strain MIT 9211)).